The following is a 510-amino-acid chain: Protein disulfide-isomerase (510 aa).

The first 20 residues, 1 to 20 (MLRRALLCLALTALFRAGAG), serve as a signal peptide directing secretion. The Thioredoxin 1 domain maps to 27-136 (HVLVLHKGNF…IVNWLKKRTG (110 aa)). Residues C55 and C58 each act as nucleophile in the active site. An intrachain disulfide couples C55 to C58. K202 is subject to N6-acetyllysine. N6-succinyllysine occurs at positions 224 and 273. S333 and S359 each carry phosphoserine. A Thioredoxin 2 domain is found at 351-477 (GKIKPHLMSQ…FKKFLESGGQ (127 aa)). Catalysis depends on nucleophile residues C399 and C402. The cysteines at positions 399 and 402 are disulfide-linked. S429 is modified (phosphoserine). The segment at 473-510 (ESGGQDGAGDDDDLEDLEEAEEPDLEEDDDQKAVKDEL) is disordered. Acidic residues predominate over residues 480 to 502 (AGDDDDLEDLEEAEEPDLEEDDD). Positions 507 to 510 (KDEL) match the Prevents secretion from ER motif.

The protein belongs to the protein disulfide isomerase family. In terms of assembly, heterodimer; heterodimerizes with the protein microsomal triglyceride transfer MTTP. Homodimer. Monomers and homotetramers may also occur. Interacts with P4HA2, forming a heterotetramer consisting of 2 alpha subunits (P4HA2) and 2 beta (P4HB), where P4HB plays the role of a structural subunit; this tetramer catalyzes the formation of 4-hydroxyproline in collagen. Also constitutes the structural subunit of the microsomal triacylglycerol transfer protein MTTP in mammalian cells. Stabilizes both enzymes and retain them in the ER without contributing to the catalytic activity. Binds UBQLN1. Interacts with ERO1B. Interacts with ILDR2. Interacts with ERN1/IRE1A (via N-terminus); the interaction is enhanced by phosphorylation of P4HB by FAM20C in response to endoplasmic reticulum stress and results in attenuation of ERN1 activity. In terms of processing, phosphorylation of Ser-359 by FAM20C is induced by endoplasmic reticulum stress and results in a functional switch from oxidoreductase to molecular chaperone. It also promotes interaction with ERN1.

It localises to the endoplasmic reticulum. The protein localises to the endoplasmic reticulum lumen. Its subcellular location is the melanosome. It is found in the cell membrane. It carries out the reaction Catalyzes the rearrangement of -S-S- bonds in proteins.. Functionally, this multifunctional protein catalyzes the formation, breakage and rearrangement of disulfide bonds. At the cell surface, seems to act as a reductase that cleaves disulfide bonds of proteins attached to the cell. May therefore cause structural modifications of exofacial proteins. Inside the cell, seems to form/rearrange disulfide bonds of nascent proteins. At high concentrations and following phosphorylation by FAM20C, functions as a chaperone that inhibits aggregation of misfolded proteins. At low concentrations, facilitates aggregation (anti-chaperone activity). May be involved with other chaperones in the structural modification of the TG precursor in hormone biogenesis. Also acts as a structural subunit of various enzymes such as prolyl 4-hydroxylase and microsomal triacylglycerol transfer protein MTTP. Receptor for LGALS9; the interaction retains P4HB at the cell surface of Th2 T helper cells, increasing disulfide reductase activity at the plasma membrane, altering the plasma membrane redox state and enhancing cell migration. The chain is Protein disulfide-isomerase (P4HB) from Bos taurus (Bovine).